A 670-amino-acid polypeptide reads, in one-letter code: Probable potassium transport system protein Kup 1 (670 aa).

Transmembrane regions (helical) follow at residues 14 to 34 (GAGFIIAMGIVYGDIGTSPLY), 58 to 78 (LSLIIWTLTLITTVKYVWIAL), 101 to 121 (WLIIPAMIGGAALLSDGALTP), 147 to 167 (LPIVIITLAILAVLFLIQRFG), 175 to 195 (FGPVMFIWFSFLGITGLINLF), 196 to 216 (GDFSVLQAINPYWAIHLLLSP), 220 to 240 (AGIFVLGSVFLATTGAEALYS), 252 to 272 (VSWPFVKVCIILSYCGQGAWL), 294 to 314 (LIIFSVILATLAAIIASQALI), 345 to 365 (LYIPAVNLGLWLAASFIVVYF), 374 to 394 (AYGLAITVTMLMTTTLLTVYL), 403 to 423 (VLVGLFFTVFIFIEGLFFAAS), and 427 to 447 (FMHGGYVVVIIAAMILFVMAI).

It belongs to the HAK/KUP transporter (TC 2.A.72) family.

The protein localises to the cell membrane. The enzyme catalyses K(+)(in) + H(+)(in) = K(+)(out) + H(+)(out). Transport of potassium into the cell. Likely operates as a K(+):H(+) symporter. In Lactococcus lactis subsp. lactis (strain IL1403) (Streptococcus lactis), this protein is Probable potassium transport system protein Kup 1.